A 194-amino-acid chain; its full sequence is Holliday junction branch migration complex subunit RuvA (194 aa).

The tract at residues 1–61 (MYDFLTGIIK…DNQISLYGFK (61 aa)) is domain I. Residues 62–139 (TVKERNLFQK…GDFSKNIAPM (78 aa)) form a domain II region. The interval 139–143 (MKNLL) is flexible linker. Residues 144 to 194 (ENSAELDDALAALVALGFSSKEVNKINPKLASLGELTTDAYIQKGLKLLTK) form a domain III region.

This sequence belongs to the RuvA family. As to quaternary structure, homotetramer. Forms an RuvA(8)-RuvB(12)-Holliday junction (HJ) complex. HJ DNA is sandwiched between 2 RuvA tetramers; dsDNA enters through RuvA and exits via RuvB. An RuvB hexamer assembles on each DNA strand where it exits the tetramer. Each RuvB hexamer is contacted by two RuvA subunits (via domain III) on 2 adjacent RuvB subunits; this complex drives branch migration. In the full resolvosome a probable DNA-RuvA(4)-RuvB(12)-RuvC(2) complex forms which resolves the HJ.

Its subcellular location is the cytoplasm. In terms of biological role, the RuvA-RuvB-RuvC complex processes Holliday junction (HJ) DNA during genetic recombination and DNA repair, while the RuvA-RuvB complex plays an important role in the rescue of blocked DNA replication forks via replication fork reversal (RFR). RuvA specifically binds to HJ cruciform DNA, conferring on it an open structure. The RuvB hexamer acts as an ATP-dependent pump, pulling dsDNA into and through the RuvAB complex. HJ branch migration allows RuvC to scan DNA until it finds its consensus sequence, where it cleaves and resolves the cruciform DNA. The protein is Holliday junction branch migration complex subunit RuvA of Oenococcus oeni (strain ATCC BAA-331 / PSU-1).